The chain runs to 200 residues: uncharacterized protein (200 aa).

The segment at 1–21 (MSNSAQRDARNSRDESARASD) is disordered. Basic and acidic residues predominate over residues 7 to 21 (RDARNSRDESARASD).

This is an uncharacterized protein from Mycobacterium tuberculosis (strain ATCC 25618 / H37Rv).